The chain runs to 743 residues: Putative metallophosphoesterase At3g03305 (743 aa).

An N-terminal signal peptide occupies residues 1 to 40; sequence MESIGDDDELRSKTVSLPRRISFTILLLLLLISLSTRVSG. Asp-66, His-68, and Asp-101 together coordinate a divalent metal cation. The next 5 membrane-spanning stretches (helical) occupy residues 514-534, 565-585, 623-643, 687-704, and 716-736; these read ILWP…CIII, MPVV…FPWF, VMVV…LVVC, LFRK…WKHF, and MNVV…LYVI.

This sequence belongs to the metallophosphoesterase superfamily. Requires a divalent metal cation as cofactor.

The protein localises to the membrane. This Arabidopsis thaliana (Mouse-ear cress) protein is Putative metallophosphoesterase At3g03305.